A 366-amino-acid chain; its full sequence is MSWNISHPQLSDKLFGKNGVLEEQKSPGFKKRETEVYVGNLPLDISKEEILYLLKDFNPLDVHKIQNGCKCFAFVDLGSMQKVTLAIQELNGKLFHKRKLFVNTSKRPPKRTPDMIQQPRAPLVLEKASGEGFGKTAAIIQLAPKAPVDLCETEKLRAAFFAVPLEMRGSFLVLLLRECFRDLSWLALIHSVRGEAGLLVTSIVPKTPFFWAMHVTEALHQNMQALFSTLAQAEEQQPYLEGSTVMRGTRCLAEYHLGDYGHAWNRCWVLDRVDTWAVVMFIDFGQLATIPVQSLRSLDSDDFWTIPPLTQPFMLEKDILSSYEVVHRILKGKITGALNSAVTAPASNLAVVPPLLPLGCLQQAAA.

Positions 34–107 constitute an RRM domain; sequence TEVYVGNLPL…RKLFVNTSKR (74 aa). The Tudor domain maps to 210-317; the sequence is FWAMHVTEAL…PLTQPFMLEK (108 aa). Residues 216 to 237 adopt a coiled-coil conformation; sequence TEALHQNMQALFSTLAQAEEQQ.

The chain is Tudor domain-containing protein 10 (TDRD10) from Homo sapiens (Human).